The sequence spans 205 residues: Small ribosomal subunit protein uS4 (205 aa).

Basic and acidic residues predominate over residues 1 to 16 (MSKRESSKYKIDRRMG). The disordered stretch occupies residues 1–46 (MSKRESSKYKIDRRMGENIWGRPKSPVNRREYGPGQHGQRRKSKLS). The S4 RNA-binding domain occupies 94–157 (SRLDAIVYRA…KQLVTVLEAV (64 aa)).

The protein belongs to the universal ribosomal protein uS4 family. In terms of assembly, part of the 30S ribosomal subunit. Contacts protein S5. The interaction surface between S4 and S5 is involved in control of translational fidelity.

In terms of biological role, one of the primary rRNA binding proteins, it binds directly to 16S rRNA where it nucleates assembly of the body of the 30S subunit. Its function is as follows. With S5 and S12 plays an important role in translational accuracy. In Sinorhizobium medicae (strain WSM419) (Ensifer medicae), this protein is Small ribosomal subunit protein uS4.